A 215-amino-acid chain; its full sequence is Small ribosomal subunit protein uS7 (215 aa).

The protein belongs to the universal ribosomal protein uS7 family. In terms of assembly, part of the 30S ribosomal subunit.

Functionally, one of the primary rRNA binding proteins, it binds directly to 16S rRNA where it nucleates assembly of the head domain of the 30S subunit. Is located at the subunit interface close to the decoding center. In Pyrococcus furiosus (strain ATCC 43587 / DSM 3638 / JCM 8422 / Vc1), this protein is Small ribosomal subunit protein uS7.